Consider the following 235-residue polypeptide: 15,16-dihydrobiliverdin:ferredoxin oxidoreductase (235 aa).

It belongs to the HY2 family.

It catalyses the reaction 15,16-dihydrobiliverdin + oxidized 2[4Fe-4S]-[ferredoxin] = biliverdin IXalpha + reduced 2[4Fe-4S]-[ferredoxin] + 2 H(+). In terms of biological role, catalyzes the two-electron reduction of biliverdin IX-alpha at the C15 methine bridge. This is 15,16-dihydrobiliverdin:ferredoxin oxidoreductase from Synechococcus sp. (strain CC9902).